The sequence spans 419 residues: UDP-N-acetylglucosamine 1-carboxyvinyltransferase (419 aa).

22–23 (KN) contributes to the phosphoenolpyruvate binding site. Residue Arg95 coordinates UDP-N-acetyl-alpha-D-glucosamine. Catalysis depends on Cys119, which acts as the Proton donor. Position 119 is a 2-(S-cysteinyl)pyruvic acid O-phosphothioketal (Cys119). UDP-N-acetyl-alpha-D-glucosamine contacts are provided by residues 164–167 (KVSV), Asp308, and Ile330.

This sequence belongs to the EPSP synthase family. MurA subfamily.

The protein resides in the cytoplasm. The enzyme catalyses phosphoenolpyruvate + UDP-N-acetyl-alpha-D-glucosamine = UDP-N-acetyl-3-O-(1-carboxyvinyl)-alpha-D-glucosamine + phosphate. Its pathway is cell wall biogenesis; peptidoglycan biosynthesis. Cell wall formation. Adds enolpyruvyl to UDP-N-acetylglucosamine. The chain is UDP-N-acetylglucosamine 1-carboxyvinyltransferase from Rickettsia prowazekii (strain Madrid E).